A 323-amino-acid polypeptide reads, in one-letter code: GILT-like protein C02D5.2 (323 aa).

The chain crosses the membrane as a helical span at residues 13–32 (LICRPILTFSSLHILTAFLI). Asn35 carries an N-linked (GlcNAc...) asparagine glycan. 2 helical membrane-spanning segments follow: residues 37–59 (SYIN…HRFL) and 87–104 (YIYG…YRSL). A glycan (N-linked (GlcNAc...) asparagine) is linked at Asn289.

The protein belongs to the GILT family.

Its subcellular location is the membrane. This chain is GILT-like protein C02D5.2, found in Caenorhabditis elegans.